A 709-amino-acid chain; its full sequence is Twinkle homolog protein, chloroplastic/mitochondrial (709 aa).

The N-terminal 16 residues, 1–16, are a transit peptide targeting the chloroplast and mitochondrion; the sequence is MRFLLRLPQIHFRKLS. The Toprim domain maps to 280–385; sequence SEVIIVEGEI…KKSEDEHFKD (106 aa). Glu-286, Asp-348, and Asp-350 together coordinate Mg(2+). Residues 430–698 enclose the SF4 helicase domain; the sequence is THGHEYGVST…GSYSDSPVTP (269 aa). 460 to 467 serves as a coordination point for ATP; the sequence is GIPNSGKS.

Mg(2+) serves as cofactor. Expressed in young leaves and shoot apex tissues. Detected in developing tissues such as cotyledons, sepals, pistils and inflorescences. Nearly undetectable in mature leaves.

The protein resides in the plastid. It is found in the chloroplast. Its subcellular location is the mitochondrion. It carries out the reaction ATP + H2O = ADP + phosphate + H(+). Has both DNA primase and DNA helicase activities and may be involved in organelle DNA replication. Capable of producing RNA primers of 9 to 18 bases from a single-stranded DNA template. This Arabidopsis thaliana (Mouse-ear cress) protein is Twinkle homolog protein, chloroplastic/mitochondrial.